Consider the following 100-residue polypeptide: Urease subunit gamma (100 aa).

It belongs to the urease gamma subunit family. Heterotrimer of UreA (gamma), UreB (beta) and UreC (alpha) subunits. Three heterotrimers associate to form the active enzyme.

Its subcellular location is the cytoplasm. It catalyses the reaction urea + 2 H2O + H(+) = hydrogencarbonate + 2 NH4(+). It functions in the pathway nitrogen metabolism; urea degradation; CO(2) and NH(3) from urea (urease route): step 1/1. The sequence is that of Urease subunit gamma from Trichormus variabilis (strain ATCC 29413 / PCC 7937) (Anabaena variabilis).